The sequence spans 2655 residues: Probable polyketide synthase 42 (2655 aa).

The 430-residue stretch at 16–445 (QNGVAVIGVG…GSNCCIILSE (430 aa)) folds into the Ketosynthase family 3 (KS3) domain. Catalysis depends on for beta-ketoacyl synthase activity residues Cys-186, His-325, and His-368. An acyl/malonyl transferase region spans residues 634–667 (GIKSDIMVGHSFGEIACSYCSGMVDFKTLCYLTY). Ser-644 functions as the For acyl/malonyl transferase activity in the catalytic mechanism. Residues 926-1059 (HPTWKKANKN…ANYSLFKHND (134 aa)) are N-terminal hotdog fold. The region spanning 926 to 1234 (HPTWKKANKN…CKSSIPIIDS (309 aa)) is the PKS/mFAS DH domain. The active-site Proton acceptor; for dehydratase activity is the His-970. Residues 1074–1234 (NYTIISKDEL…CKSSIPIIDS (161 aa)) are C-terminal hotdog fold. The active-site Proton donor; for dehydratase activity is Asp-1146. The interval 1700-1719 (YNNNNNNNNNNNNNNNNNNN) is disordered. A Carrier domain is found at 2517–2594 (NENNNIGDLL…TTIEIIIKGY (78 aa)). An O-(pantetheine 4'-phosphoryl)serine modification is found at Ser-2554. The segment at 2612-2655 (SVVQKETIKDNNENKDDIKIDMDDKKENLKGKKENIDDKKENNN) is disordered. Positions 2617–2655 (ETIKDNNENKDDIKIDMDDKKENLKGKKENIDDKKENNN) are enriched in basic and acidic residues. Positions 2618–2655 (TIKDNNENKDDIKIDMDDKKENLKGKKENIDDKKENNN) form a coiled coil.

Requires pantetheine 4'-phosphate as cofactor.

Probable polyketide synthase. The chain is Probable polyketide synthase 42 (pks42) from Dictyostelium discoideum (Social amoeba).